We begin with the raw amino-acid sequence, 483 residues long: Auxin transporter-like protein 2 (483 aa).

The Cytoplasmic portion of the chain corresponds to 1 to 53; that stretch reads MENGEKAAETVVVGNYVEMEKDGKALDIKSKLSDMFWHGGSAYDAWFSCASNQ. A helical transmembrane segment spans residues 54 to 71; that stretch reads VAQVLLTLPYSFSQLGML. Residues 72–73 lie on the Extracellular side of the membrane; sequence SG. The helical transmembrane segment at 74–94 threads the bilayer; the sequence is ILFQLFYGILGSWTAYLISIL. The Cytoplasmic portion of the chain corresponds to 95-130; that stretch reads YVEYRTRKEREKVNFRNHVIQWFEVLDGLLGKHWRN. The helical transmembrane segment at 131-151 threads the bilayer; that stretch reads VGLAFNCTFLLFGSVIQLIAC. At 152-166 the chain is on the extracellular side; sequence ASNIYYINDNLDKRT. Residues 167-187 traverse the membrane as a helical segment; it reads WTYIFGACCATTVFIPSFHNY. The Cytoplasmic segment spans residues 188-190; it reads RIW. The helical transmembrane segment at 191–211 threads the bilayer; it reads SFLGLLMTTYTAWYLTIASIL. The Extracellular segment spans residues 212–226; the sequence is HGQVEGVKHSGPSKL. A helical membrane pass occupies residues 227-247; the sequence is VLYFTGATNILYTFGGHAVTV. At 248–261 the chain is on the cytoplasmic side; sequence EIMHAMWKPQKFKS. The helical transmembrane segment at 262–282 threads the bilayer; that stretch reads IYLFATLYVLTLTLPSASAVY. The Extracellular segment spans residues 283–306; the sequence is WAFGDLLLNHSNAFALLPKNLYRD. Asn291 carries an N-linked (GlcNAc...) asparagine glycan. Residues 307–327 traverse the membrane as a helical segment; it reads FAVVLMLIHQFITFGFACTPL. Residues 328–350 lie on the Cytoplasmic side of the membrane; it reads YFVWEKLIGMHECRSMCKRAAAR. Residues 351–371 traverse the membrane as a helical segment; the sequence is LPVVIPIWFLAIIFPFFGPIN. At 372 to 374 the chain is on the extracellular side; that stretch reads STV. A helical membrane pass occupies residues 375-395; it reads GSLLVSFTVYIIPALAHIFTF. Over 396–422 the chain is Cytoplasmic; that stretch reads RSSAARENAVEQPPRFLGRWTGAFTIN. The helical transmembrane segment at 423 to 443 threads the bilayer; the sequence is AFIVVWVFIVGFGFGGWASMI. The Extracellular segment spans residues 444-483; that stretch reads NFVHQIDTFGLFTKCYQCPPPVMVSPPPISHPHFNHTHGL. A glycan (N-linked (GlcNAc...) asparagine) is linked at Asn478.

This sequence belongs to the amino acid/polyamine transporter 2 family. Amino acid/auxin permease (AAAP) (TC 2.A.18.1) subfamily.

It is found in the cell membrane. Carrier protein involved in proton-driven auxin influx. Mediates the formation of auxin gradient from developing leaves (site of auxin biosynthesis) to tips by contributing to the loading of auxin in vascular tissues and facilitating acropetal (base to tip) auxin transport within inner tissues of the root apex, and basipetal (tip to base) auxin transport within outer tissues of the root apex. The polypeptide is Auxin transporter-like protein 2 (LAX2) (Arabidopsis thaliana (Mouse-ear cress)).